The primary structure comprises 176 residues: 3-hydroxyanthranilate 3,4-dioxygenase (176 aa).

R44 provides a ligand contact to O2. The Fe cation site is built by H48, E54, and H92. A substrate-binding site is contributed by E54. Substrate is bound by residues R96 and E106. C121, C124, C158, and C161 together coordinate Fe cation.

Belongs to the 3-HAO family. As to quaternary structure, homodimer. Fe(2+) is required as a cofactor.

It carries out the reaction 3-hydroxyanthranilate + O2 = (2Z,4Z)-2-amino-3-carboxymuconate 6-semialdehyde. It participates in cofactor biosynthesis; NAD(+) biosynthesis; quinolinate from L-kynurenine: step 3/3. Functionally, catalyzes the oxidative ring opening of 3-hydroxyanthranilate to 2-amino-3-carboxymuconate semialdehyde, which spontaneously cyclizes to quinolinate. The chain is 3-hydroxyanthranilate 3,4-dioxygenase from Xanthomonas campestris pv. campestris (strain B100).